Reading from the N-terminus, the 354-residue chain is MTVLKNERYLKALLREPVDMTPVWMMRQAGRYLPEYKATRAKAGDFMSLCRNADLACEVTLQPLRRYDLDAAILFSDILTIPDAMGLGLSFGVGEGPKFARPVENKSAVQNLPIPDPEQELQYVMNAVRTIRRELKGEVPLIGFSGSPWTLATYMVEGGSSKAFTKIKKMMYSEPKILHLLLDKLADAVILYLNAQINAGVQAVMVFDTWGGVLGHREYLDFSLQYMHKIVDGLIRENDGYKVPVTLFTKGGGLWLEAMASTGCDALGLDWTVNLAEAKARVGHKVALQGNMDPSVLYASPARIEQEVQQILADFGQGSGHVFNLGHGIHQDVPEISPKVFVDAVHQYSVSYHQ.

Substrate-binding positions include arginine 27–arginine 31, aspartate 77, tyrosine 154, threonine 209, and histidine 327.

It belongs to the uroporphyrinogen decarboxylase family. As to quaternary structure, homodimer.

It is found in the cytoplasm. It catalyses the reaction uroporphyrinogen III + 4 H(+) = coproporphyrinogen III + 4 CO2. It participates in porphyrin-containing compound metabolism; protoporphyrin-IX biosynthesis; coproporphyrinogen-III from 5-aminolevulinate: step 4/4. Functionally, catalyzes the decarboxylation of four acetate groups of uroporphyrinogen-III to yield coproporphyrinogen-III. The sequence is that of Uroporphyrinogen decarboxylase from Histophilus somni (strain 129Pt) (Haemophilus somnus).